Consider the following 498-residue polypeptide: MAMVSNVKYFADALQGTQGKVGTFTVLGENVFFKRGDGTDTVCGLEMVAGRILRARSDVHFCEPKYFVEMDDGEKVCSFELLDCKPLGSMAPGRKGKKSVGSVTQYLSGLYQTFAAAAAAHSVGVVHSDLHTGNVMLCPEPVSHYVYNLGGGEMLSLETNGVRAVVVDLGMARIPGKNTVACDIFVHVGHVVNGRPDYAADVRTLTLGSCYDMVMMCASGKPSLEERMLCYEVMAAYNNLFAGVCAPSKGGWFVDHYPSMCAVMEATIPDSVASRGGGSWLLAVANMCKLLVPRPYVKRACGKEKAHAMWMTLFTELGLTAKKSISKVDMVDAVQRLRAIADGSEIPPASLMKAACAVGLLTASVAEACYEKVEEIKASHVGMLRWKDALDAWVRLPVRCSGSVPKLGSTVILHTESGTEETVVTQSMLRQIVKTREALDMAQAASDAVWTDTAYYEADDELMKGAHEESAEDFATSFLKGGTTGPIAKRCRLILKSL.

This Dryophytes versicolor (chameleon treefrog) protein is Putative phosphotransferase 057R.